The primary structure comprises 274 residues: 2-amino-4,5-dihydroxy-6-oxo-7-(phosphonooxy)heptanoate synthase (274 aa).

It belongs to the DeoC/FbaB aldolase family. GriI subfamily. As to quaternary structure, homodecamer.

It catalyses the reaction 2-amino-4,5-dihydroxy-6-oxo-7-(phosphooxy)heptanoate = L-aspartate 4-semialdehyde + dihydroxyacetone phosphate. Functionally, catalyzes aldol condensation between L-aspartate-4-semialdehyde (ASA) and dihydroxyacetone phosphate (DHAP), to form 2-amino-4,5-dihydroxy-6-oxo-7-(phosphonooxy)heptanoate. The polypeptide is 2-amino-4,5-dihydroxy-6-oxo-7-(phosphonooxy)heptanoate synthase (griI) (Streptomyces griseus subsp. griseus (strain JCM 4626 / CBS 651.72 / NBRC 13350 / KCC S-0626 / ISP 5235)).